We begin with the raw amino-acid sequence, 699 residues long: DNA ligase (699 aa).

Residues 47 to 51 (DAQYD), 96 to 97 (SL), and Glu-128 each bind NAD(+). The active-site N6-AMP-lysine intermediate is the Lys-130. NAD(+) is bound by residues Arg-151, Glu-186, Lys-303, and Lys-327. Positions 422, 425, 440, and 446 each coordinate Zn(2+). Positions 620–699 (GDNLLLSNQT…EEWIKMVNEL (80 aa)) constitute a BRCT domain.

Belongs to the NAD-dependent DNA ligase family. LigA subfamily. Mg(2+) serves as cofactor. Mn(2+) is required as a cofactor.

The catalysed reaction is NAD(+) + (deoxyribonucleotide)n-3'-hydroxyl + 5'-phospho-(deoxyribonucleotide)m = (deoxyribonucleotide)n+m + AMP + beta-nicotinamide D-nucleotide.. Its function is as follows. DNA ligase that catalyzes the formation of phosphodiester linkages between 5'-phosphoryl and 3'-hydroxyl groups in double-stranded DNA using NAD as a coenzyme and as the energy source for the reaction. It is essential for DNA replication and repair of damaged DNA. The protein is DNA ligase of Orientia tsutsugamushi (strain Ikeda) (Rickettsia tsutsugamushi).